A 476-amino-acid polypeptide reads, in one-letter code: Lipase (476 aa).

A signal peptide spans Met1 to Ala23. The Charge relay system role is filled by Ser207. Hemolysin-type calcium-binding repeat units follow at residues Ile372 to Ile389, Glu390 to Phe407, and Ser410 to Leu427. Ca(2+) is bound by residues Asp437, Asp440, and Asp448.

Belongs to the AB hydrolase superfamily. Lipase family.

It catalyses the reaction a triacylglycerol + H2O = a diacylglycerol + a fatty acid + H(+). The polypeptide is Lipase (Pseudomonas fluorescens).